The chain runs to 230 residues: Prolactin-6A1 (230 aa).

The N-terminal stretch at 1–29 is a signal peptide; sequence MLSLSQPCFSGTLLMLLASNFLLWKNVAP. The N-linked (GlcNAc...) asparagine glycan is linked to N57. Intrachain disulfides connect C89–C205 and C222–C230.

It belongs to the somatotropin/prolactin family. In terms of tissue distribution, expressed in both placenta and decidual tissues. Detected first in deciduals cells early in gestation and in trophoblasts later in pregnancy.

The protein resides in the secreted. This chain is Prolactin-6A1 (Prl6a1), found in Mus musculus (Mouse).